Here is a 376-residue protein sequence, read N- to C-terminus: Putative glutamate--cysteine ligase 2 (376 aa).

The protein belongs to the glutamate--cysteine ligase type 2 family. YbdK subfamily.

It carries out the reaction L-cysteine + L-glutamate + ATP = gamma-L-glutamyl-L-cysteine + ADP + phosphate + H(+). Functionally, ATP-dependent carboxylate-amine ligase which exhibits weak glutamate--cysteine ligase activity. In Corynebacterium glutamicum (strain R), this protein is Putative glutamate--cysteine ligase 2.